The sequence spans 809 residues: Protein PHOX3 (809 aa).

A disordered region spans residues 1 to 22 (MEKQNEEISTDDAETSQSQLVD). TPR repeat units lie at residues 126 to 159 (AQGL…LPKD), 164 to 199 (SHVR…TPDH), 200 to 233 (NKAL…DPKN), 235 to 265 (MASE…PPDY), and 274 to 311 (AALW…EKKN). The tract at residues 288-339 (TKKSNQVEEKSEGEGEDVEPEKKNNVLAEKGKEKIKMKVKGKQSDKRSDTSK) is disordered. A Phosphoserine modification is found at Ser298. The span at 307 to 339 (PEKKNNVLAEKGKEKIKMKVKGKQSDKRSDTSK) shows a compositional bias: basic and acidic residues. The PB1 domain maps to 359–438 (NKDVKFVYSD…GTMRFYVVEV (80 aa)). 3 TPR repeats span residues 508 to 541 (SEAM…SLLN), 563 to 597 (ESVS…KPEC), and 615 to 648 (SWYY…IKKS). A disordered region spans residues 656–686 (ETGKESEPSQAGKTDCLTHEKDLGSSTQNNP). The TPR 9 repeat unit spans residues 709–741 (SIMEYKLDQPFWRESLEAAMEKFELAGTCKDDV).

In terms of biological role, carboxylate clamp type tetratricopeptide repeat protein that may act as a potential Hsp90/Hsp70 co-chaperone. Contributes to polar growth of root hairs. This chain is Protein PHOX3, found in Arabidopsis thaliana (Mouse-ear cress).